A 277-amino-acid polypeptide reads, in one-letter code: Diaminopimelate epimerase (277 aa).

Positions 11 and 62 each coordinate substrate. Catalysis depends on cysteine 71, which acts as the Proton donor. Residues 72-73 (GN), asparagine 160, asparagine 193, and 211-212 (ER) each bind substrate. Cysteine 220 acts as the Proton acceptor in catalysis. 221–222 (GT) provides a ligand contact to substrate.

The protein belongs to the diaminopimelate epimerase family. Homodimer.

The protein resides in the cytoplasm. The enzyme catalyses (2S,6S)-2,6-diaminopimelate = meso-2,6-diaminopimelate. Its pathway is amino-acid biosynthesis; L-lysine biosynthesis via DAP pathway; DL-2,6-diaminopimelate from LL-2,6-diaminopimelate: step 1/1. Functionally, catalyzes the stereoinversion of LL-2,6-diaminopimelate (L,L-DAP) to meso-diaminopimelate (meso-DAP), a precursor of L-lysine. The sequence is that of Diaminopimelate epimerase from Methanococcus maripaludis (strain C6 / ATCC BAA-1332).